Reading from the N-terminus, the 493-residue chain is Glutamyl-tRNA(Gln) amidotransferase subunit A (493 aa).

Catalysis depends on charge relay system residues lysine 81 and serine 156. Catalysis depends on serine 180, which acts as the Acyl-ester intermediate.

The protein belongs to the amidase family. GatA subfamily. In terms of assembly, heterotrimer of A, B and C subunits.

It catalyses the reaction L-glutamyl-tRNA(Gln) + L-glutamine + ATP + H2O = L-glutaminyl-tRNA(Gln) + L-glutamate + ADP + phosphate + H(+). Its function is as follows. Allows the formation of correctly charged Gln-tRNA(Gln) through the transamidation of misacylated Glu-tRNA(Gln) in organisms which lack glutaminyl-tRNA synthetase. The reaction takes place in the presence of glutamine and ATP through an activated gamma-phospho-Glu-tRNA(Gln). This chain is Glutamyl-tRNA(Gln) amidotransferase subunit A, found in Mycobacterium avium (strain 104).